Here is a 38-residue protein sequence, read N- to C-terminus: Photosystem II reaction center protein T (38 aa).

The chain crosses the membrane as a helical span at residues 3 to 23; that stretch reads ALVYTFLLVSTLGIIFFAIFF.

Belongs to the PsbT family. As to quaternary structure, PSII is composed of 1 copy each of membrane proteins PsbA, PsbB, PsbC, PsbD, PsbE, PsbF, PsbH, PsbI, PsbJ, PsbK, PsbL, PsbM, PsbT, PsbY, PsbZ, Psb30/Ycf12, at least 3 peripheral proteins of the oxygen-evolving complex and a large number of cofactors. It forms dimeric complexes.

It localises to the plastid. Its subcellular location is the chloroplast thylakoid membrane. Functionally, found at the monomer-monomer interface of the photosystem II (PS II) dimer, plays a role in assembly and dimerization of PSII. PSII is a light-driven water plastoquinone oxidoreductase, using light energy to abstract electrons from H(2)O, generating a proton gradient subsequently used for ATP formation. The chain is Photosystem II reaction center protein T from Secale cereale (Rye).